The sequence spans 237 residues: uncharacterized protein (237 aa).

50–57 (APPGTGKS) contacts ATP.

This is an uncharacterized protein from Escherichia coli (strain K12).